We begin with the raw amino-acid sequence, 237 residues long: Uridylate kinase (237 aa).

Residue 10-13 (KFSG) coordinates ATP. The tract at residues 18–23 (GDSGFG) is involved in allosteric activation by GTP. UMP is bound at residue glycine 52. 2 residues coordinate ATP: glycine 53 and arginine 57. Residues aspartate 73 and 134 to 141 (TGNPFFTT) each bind UMP. ATP is bound by residues threonine 161, tyrosine 167, and aspartate 170.

Belongs to the UMP kinase family. As to quaternary structure, homohexamer.

Its subcellular location is the cytoplasm. It carries out the reaction UMP + ATP = UDP + ADP. Its pathway is pyrimidine metabolism; CTP biosynthesis via de novo pathway; UDP from UMP (UMPK route): step 1/1. Its activity is regulated as follows. Allosterically activated by GTP. Inhibited by UTP. In terms of biological role, catalyzes the reversible phosphorylation of UMP to UDP. The chain is Uridylate kinase from Campylobacter hominis (strain ATCC BAA-381 / DSM 21671 / CCUG 45161 / LMG 19568 / NCTC 13146 / CH001A).